The chain runs to 1351 residues: Non-structural polyprotein 1AB (1351 aa).

Residues 105–144 (LVQDHKAKTREVEDLKSQLSQLRMEHEILRHEYERLKLKS) adopt a coiled-coil conformation. 5 helical membrane passes run 153 to 173 (LKVL…TNGA), 231 to 251 (LVFQ…VYYM), 257 to 277 (PIVM…LLAV), 304 to 324 (ISIL…TFMA), and 337 to 357 (VVFA…PPWV). Active-site charge relay system; for serine protease activity residues include histidine 452, aspartate 481, and serine 544. A coiled-coil region spans residues 579–635 (EVRKISKREQELEDRVKQLEGMLNMDQAYVDSNLIVDLVREAVQREMKVLRTELANL). An O-(5'-phospho-RNA)-tyrosine modification is found at tyrosine 662. Acidic residues predominate over residues 687 to 699 (YDDEDEQSEEEAG). Disordered stretches follow at residues 687–708 (YDDE…DPGD) and 822–842 (RKRV…GPEE). Basic residues predominate over residues 822–832 (RKRVQQPKKLQ). Residues 833–842 (RGPEDPGPEE) show a composition bias toward basic and acidic residues. One can recognise a RdRp catalytic domain in the interval 1085-1217 (PYWIEFDWTR…TSPSVPNDYV (133 aa)).

It belongs to the astroviridae polyprotein 1AB family. Monomer. Post-translationally, cleaved by the viral and host proteases. The protease is probably autocatalytically cleaved.

It localises to the host membrane. It carries out the reaction RNA(n) + a ribonucleoside 5'-triphosphate = RNA(n+1) + diphosphate. Its function is as follows. Responsible for the cleavage of the polyprotein into functional products. Protein covalently attached to the 5' extremity of the genomic and subgenomic RNAs. It may serve as a primer for the replicase. This chain is Non-structural polyprotein 1AB (ORF1), found in Ovis aries (Sheep).